The sequence spans 133 residues: ATP synthase epsilon chain (133 aa).

The interval 103–133 (VSQMEGQEPSTEKIKAQQNFNRARARVQATK) is disordered.

Belongs to the ATPase epsilon chain family. As to quaternary structure, F-type ATPases have 2 components, CF(1) - the catalytic core - and CF(0) - the membrane proton channel. CF(1) has five subunits: alpha(3), beta(3), gamma(1), delta(1), epsilon(1). CF(0) has three main subunits: a, b and c.

The protein localises to the cellular thylakoid membrane. In terms of biological role, produces ATP from ADP in the presence of a proton gradient across the membrane. The polypeptide is ATP synthase epsilon chain (Prochlorococcus marinus (strain MIT 9313)).